The following is a 529-amino-acid chain: Endoglucanase 21 (529 aa).

Positions 1–24 are cleaved as a signal peptide; that stretch reads MVAAMTMCAAVAVLLVLTSTMAAA. The Nucleophile role is filled by aspartate 89. An N-linked (GlcNAc...) asparagine glycan is attached at asparagine 342. Active-site residues include histidine 429, aspartate 481, and glutamate 490.

The protein belongs to the glycosyl hydrolase 9 (cellulase E) family. Expressed in roots and flowers.

Its subcellular location is the secreted. It catalyses the reaction Endohydrolysis of (1-&gt;4)-beta-D-glucosidic linkages in cellulose, lichenin and cereal beta-D-glucans.. This chain is Endoglucanase 21 (GLU9), found in Oryza sativa subsp. japonica (Rice).